Here is a 475-residue protein sequence, read N- to C-terminus: Ribulose bisphosphate carboxylase large chain (475 aa).

Positions 1–2 (MS) are excised as a propeptide. At Pro-3 the chain carries N-acetylproline. Position 14 is an N6,N6,N6-trimethyllysine (Lys-14). Residues Asn-123 and Thr-173 each contribute to the substrate site. The Proton acceptor role is filled by Lys-175. A substrate-binding site is contributed by Lys-177. The Mg(2+) site is built by Lys-201, Asp-203, and Glu-204. At Lys-201 the chain carries N6-carboxylysine. His-294 functions as the Proton acceptor in the catalytic mechanism. Substrate is bound by residues Arg-295, His-327, and Ser-379.

The protein belongs to the RuBisCO large chain family. Type I subfamily. In terms of assembly, heterohexadecamer of 8 large chains and 8 small chains; disulfide-linked. The disulfide link is formed within the large subunit homodimers. Mg(2+) is required as a cofactor. The disulfide bond which can form in the large chain dimeric partners within the hexadecamer appears to be associated with oxidative stress and protein turnover.

It localises to the plastid. The protein resides in the chloroplast. It carries out the reaction 2 (2R)-3-phosphoglycerate + 2 H(+) = D-ribulose 1,5-bisphosphate + CO2 + H2O. The enzyme catalyses D-ribulose 1,5-bisphosphate + O2 = 2-phosphoglycolate + (2R)-3-phosphoglycerate + 2 H(+). RuBisCO catalyzes two reactions: the carboxylation of D-ribulose 1,5-bisphosphate, the primary event in carbon dioxide fixation, as well as the oxidative fragmentation of the pentose substrate in the photorespiration process. Both reactions occur simultaneously and in competition at the same active site. This chain is Ribulose bisphosphate carboxylase large chain, found in Betula papyrifera (Paper birch).